Here is a 457-residue protein sequence, read N- to C-terminus: Siroheme synthase (457 aa).

Residues 1 to 204 (MDHLPIFCQL…ADEKAVNATT (204 aa)) form a precorrin-2 dehydrogenase /sirohydrochlorin ferrochelatase region. Residues 22–23 (DV) and 43–44 (LT) contribute to the NAD(+) site. Position 128 is a phosphoserine (serine 128). Residues 216-457 (GEVVLVGAGP…RDKLNWFSNY (242 aa)) form a uroporphyrinogen-III C-methyltransferase region. Proline 225 is a binding site for S-adenosyl-L-methionine. Aspartate 248 acts as the Proton acceptor in catalysis. Lysine 270 functions as the Proton donor in the catalytic mechanism. S-adenosyl-L-methionine-binding positions include 301–303 (GGD), isoleucine 306, 331–332 (TA), methionine 382, and glycine 411.

It in the N-terminal section; belongs to the precorrin-2 dehydrogenase / sirohydrochlorin ferrochelatase family. This sequence in the C-terminal section; belongs to the precorrin methyltransferase family.

It carries out the reaction uroporphyrinogen III + 2 S-adenosyl-L-methionine = precorrin-2 + 2 S-adenosyl-L-homocysteine + H(+). The enzyme catalyses precorrin-2 + NAD(+) = sirohydrochlorin + NADH + 2 H(+). The catalysed reaction is siroheme + 2 H(+) = sirohydrochlorin + Fe(2+). It participates in cofactor biosynthesis; adenosylcobalamin biosynthesis; precorrin-2 from uroporphyrinogen III: step 1/1. Its pathway is cofactor biosynthesis; adenosylcobalamin biosynthesis; sirohydrochlorin from precorrin-2: step 1/1. The protein operates within porphyrin-containing compound metabolism; siroheme biosynthesis; precorrin-2 from uroporphyrinogen III: step 1/1. It functions in the pathway porphyrin-containing compound metabolism; siroheme biosynthesis; siroheme from sirohydrochlorin: step 1/1. It participates in porphyrin-containing compound metabolism; siroheme biosynthesis; sirohydrochlorin from precorrin-2: step 1/1. Its function is as follows. Multifunctional enzyme that catalyzes the SAM-dependent methylations of uroporphyrinogen III at position C-2 and C-7 to form precorrin-2 via precorrin-1. Then it catalyzes the NAD-dependent ring dehydrogenation of precorrin-2 to yield sirohydrochlorin. Finally, it catalyzes the ferrochelation of sirohydrochlorin to yield siroheme. In Salmonella choleraesuis (strain SC-B67), this protein is Siroheme synthase.